We begin with the raw amino-acid sequence, 308 residues long: Methionyl-tRNA formyltransferase (308 aa).

109-112 (SLLP) serves as a coordination point for (6S)-5,6,7,8-tetrahydrofolate.

The protein belongs to the Fmt family.

It catalyses the reaction L-methionyl-tRNA(fMet) + (6R)-10-formyltetrahydrofolate = N-formyl-L-methionyl-tRNA(fMet) + (6S)-5,6,7,8-tetrahydrofolate + H(+). Its function is as follows. Attaches a formyl group to the free amino group of methionyl-tRNA(fMet). The formyl group appears to play a dual role in the initiator identity of N-formylmethionyl-tRNA by promoting its recognition by IF2 and preventing the misappropriation of this tRNA by the elongation apparatus. This is Methionyl-tRNA formyltransferase from Rhizorhabdus wittichii (strain DSM 6014 / CCUG 31198 / JCM 15750 / NBRC 105917 / EY 4224 / RW1) (Sphingomonas wittichii).